Reading from the N-terminus, the 178-residue chain is ATP synthase subunit b, chloroplastic (178 aa).

Residues 26 to 46 (TNLINIIILLIILFYFLKGLL) traverse the membrane as a helical segment.

Belongs to the ATPase B chain family. F-type ATPases have 2 components, F(1) - the catalytic core - and F(0) - the membrane proton channel. F(1) has five subunits: alpha(3), beta(3), gamma(1), delta(1), epsilon(1). F(0) has four main subunits: a(1), b(1), b'(1) and c(10-14). The alpha and beta chains form an alternating ring which encloses part of the gamma chain. F(1) is attached to F(0) by a central stalk formed by the gamma and epsilon chains, while a peripheral stalk is formed by the delta, b and b' chains.

Its subcellular location is the plastid. It is found in the chloroplast thylakoid membrane. In terms of biological role, f(1)F(0) ATP synthase produces ATP from ADP in the presence of a proton or sodium gradient. F-type ATPases consist of two structural domains, F(1) containing the extramembraneous catalytic core and F(0) containing the membrane proton channel, linked together by a central stalk and a peripheral stalk. During catalysis, ATP synthesis in the catalytic domain of F(1) is coupled via a rotary mechanism of the central stalk subunits to proton translocation. Component of the F(0) channel, it forms part of the peripheral stalk, linking F(1) to F(0). In Vaucheria litorea (Yellow-green alga), this protein is ATP synthase subunit b, chloroplastic.